The following is a 168-amino-acid chain: ATP synthase F(1) complex subunit delta, mitochondrial (168 aa).

Residues 1–22 (MLPASLLRHPGLRRLMLQARTY) constitute a mitochondrion transit peptide. Residues Lys136 and Lys165 each carry the N6-acetyllysine; alternate modification. N6-succinyllysine; alternate is present on residues Lys136 and Lys165.

This sequence belongs to the ATPase epsilon chain family. In terms of assembly, component of the ATP synthase complex composed at least of ATP5F1A/subunit alpha, ATP5F1B/subunit beta, ATP5MC1/subunit c (homooctomer), MT-ATP6/subunit a, MT-ATP8/subunit 8, ATP5ME/subunit e, ATP5MF/subunit f, ATP5MG/subunit g, ATP5MK/subunit k, ATP5MJ/subunit j, ATP5F1C/subunit gamma, ATP5F1D/subunit delta, ATP5F1E/subunit epsilon, ATP5PF/subunit F6, ATP5PB/subunit b, ATP5PD/subunit d, ATP5PO/subunit OSCP. ATP synthase complex consists of a soluble F(1) head domain (subunits alpha(3) and beta(3)) - the catalytic core - and a membrane F(0) domain - the membrane proton channel (subunits c, a, 8, e, f, g, k and j). These two domains are linked by a central stalk (subunits gamma, delta, and epsilon) rotating inside the F1 region and a stationary peripheral stalk (subunits F6, b, d, and OSCP). Component of a complex composed at least by ATPIF1, ATP5F1A, ATP5F1B, ATP5F1C AND ATP5F1E.

The protein localises to the mitochondrion. It localises to the mitochondrion inner membrane. Subunit delta, of the mitochondrial membrane ATP synthase complex (F(1)F(0) ATP synthase or Complex V) that produces ATP from ADP in the presence of a proton gradient across the membrane which is generated by electron transport complexes of the respiratory chain. ATP synthase complex consist of a soluble F(1) head domain - the catalytic core - and a membrane F(1) domain - the membrane proton channel. These two domains are linked by a central stalk rotating inside the F(1) region and a stationary peripheral stalk. During catalysis, ATP synthesis in the catalytic domain of F(1) is coupled via a rotary mechanism of the central stalk subunits to proton translocation. In vivo, can only synthesize ATP although its ATP hydrolase activity can be activated artificially in vitro. With the central stalk subunit gamma, is essential for the biogenesis of F(1) catalytic part of the ATP synthase complex namely in the formation of F1 assembly intermediate. This chain is ATP synthase F(1) complex subunit delta, mitochondrial, found in Mus musculus (Mouse).